The chain runs to 296 residues: Glycine--tRNA ligase alpha subunit (296 aa).

The protein belongs to the class-II aminoacyl-tRNA synthetase family. Tetramer of two alpha and two beta subunits.

It localises to the cytoplasm. It carries out the reaction tRNA(Gly) + glycine + ATP = glycyl-tRNA(Gly) + AMP + diphosphate. The sequence is that of Glycine--tRNA ligase alpha subunit from Polynucleobacter necessarius subsp. necessarius (strain STIR1).